Consider the following 100-residue polypeptide: MQLTPQEKDKLLIFTAALLAERRKARGLKLNYPEAIAYISAAILEGARDGRTVSELMNYGTTLLSRNDVMEGIAEMIHEIQVEATFPDGTKLVTVHNPIQ.

Belongs to the urease gamma subunit family. Heterotrimer of UreA (gamma), UreB (beta) and UreC (alpha) subunits. Three heterotrimers associate to form the active enzyme.

It is found in the cytoplasm. It carries out the reaction urea + 2 H2O + H(+) = hydrogencarbonate + 2 NH4(+). The protein operates within nitrogen metabolism; urea degradation; CO(2) and NH(3) from urea (urease route): step 1/1. In Cyanothece sp. (strain PCC 7425 / ATCC 29141), this protein is Urease subunit gamma.